Reading from the N-terminus, the 208-residue chain is Small ribosomal subunit protein uS9c (208 aa).

The N-terminal 52 residues, M1–A52, are a transit peptide targeting the chloroplast.

The protein belongs to the universal ribosomal protein uS9 family.

Its subcellular location is the plastid. The protein resides in the chloroplast. Functionally, binds directly to 16S ribosomal RNA. This is Small ribosomal subunit protein uS9c (RPS9) from Arabidopsis thaliana (Mouse-ear cress).